Reading from the N-terminus, the 512-residue chain is MKAIIHLTLLALLSVNTATNQGNSADAVTTTETATSGPTVAAADTTETNFPETASTTANTPSFPTATSPAPPIISTHSSSTIPTPAPPIISTHSSSTIPIPTAADSESTTNVNSLATSDIITASSPNDGLITMVPSETQSNNEMSPTTEDNQSSGPPTGTALLETSTLNSTGPSNPCQDDPCADNSLCVKLHNTSFCLCLEGYYYNSSTCKKGKVFPGKISVTVSETFDPEEKHSMAYQDLHSEITSLFKDVFGTSVYGQTVILTVSTSLSPRSEMRADDKFVNVTIVTILAETTSDNEKTVTEKINKAIRSSSSNFLNYDLTLRCDYYGCNQTADDCLNGLACDCKSDLQRPNPQSPFCVASSLKCPDACNAQHKQCLIKKSGGAPECACVPGYQEDANGNCQKCAFGYSGLDCKDKFQLILTIVGTIAGIVILSMIIALIVTARSNNKTKHIEEENLIDEDFQNLKLRSTGFTNLGAEGSVFPKVRITASRDSQMQNPYSRHSSMPRPDY.

The signal sequence occupies residues 1–18 (MKAIIHLTLLALLSVNTA). Residues 19 to 421 (TNQGNSADAV…GLDCKDKFQL (403 aa)) lie on the Extracellular side of the membrane. The span at 22-38 (GNSADAVTTTETATSGP) shows a compositional bias: polar residues. 2 disordered regions span residues 22–67 (GNSA…PTAT) and 133–176 (MVPS…PSNP). The segment covering 53–67 (TASTTANTPSFPTAT) has biased composition (low complexity). A compositionally biased stretch (polar residues) spans 135 to 176 (PSETQSNNEMSPTTEDNQSSGPPTGTALLETSTLNSTGPSNP). N-linked (GlcNAc...) asparagine glycans are attached at residues Asn151 and Asn169. The 39-residue stretch at 173-211 (PSNPCQDDPCADNSLCVKLHNTSFCLCLEGYYYNSSTCK) folds into the EGF-like 1 domain. Intrachain disulfides connect Cys177–Cys188, Cys182–Cys197, and Cys199–Cys210. N-linked (GlcNAc...) asparagine glycosylation is found at Asn193, Asn206, Asn284, and Asn332. The 125-residue stretch at 212–336 (KGKVFPGKIS…DYYGCNQTAD (125 aa)) folds into the SEA domain. 2 EGF-like domains span residues 322–361 (LTLRCDYYGCNQTADDCLNGLACDCKSDLQRPNPQSPFCV) and 363–404 (SSLK…GNCQ). 6 disulfides stabilise this stretch: Cys326–Cys338, Cys331–Cys344, Cys346–Cys360, Cys367–Cys378, Cys371–Cys389, and Cys391–Cys403. The helical transmembrane segment at 422–442 (ILTIVGTIAGIVILSMIIALI) threads the bilayer. The Cytoplasmic segment spans residues 443–512 (VTARSNNKTK…RHSSMPRPDY (70 aa)). Residues 493–505 (RDSQMQNPYSRHS) show a composition bias toward polar residues. Residues 493–512 (RDSQMQNPYSRHSSMPRPDY) are disordered.

Homodimer of beta subunits. Post-translationally, cleaved into two subunits, alpha and beta, probably between the first EGF domain and the SEA domain. Beta subunit contains the cytoplasmic tail and alpha subunit the extracellular tail. The homooligomerization into dimers is dependent on intrachain disulfide bonds. In terms of processing, highly N-glycosylated. Highly expressed in epithelial tissues, particularly those of the gastrointestinal and respiratory tracts, such as large intestine and trachea, followed by kidney, small intestine, appendix and stomach.

Its subcellular location is the cell membrane. The protein resides in the apical cell membrane. It is found in the secreted. Epithelial and hemopoietic transmembrane mucin that may play a role in cell signaling. The protein is Mucin-13 (MUC13) of Homo sapiens (Human).